Reading from the N-terminus, the 646-residue chain is Rho guanine nucleotide exchange factor 7 (646 aa).

One can recognise an SH3 domain in the interval 6–65 (NSQLVVRAKFNFQQTNEDELSFSKGDVIHVTRVEEGGWWEGTHNGRTGWFPSNYVREIKP). Phosphoserine is present on residues serine 7, serine 71, and serine 79. Positions 93–273 (YYNVVLQNIL…KNLSAQCQEV (181 aa)) constitute a DH domain. The PH domain maps to 295-400 (DIKTLGSVTY…WVEHLQRQTK (106 aa)). Phosphoserine is present on serine 340. Disordered regions lie at residues 402–464 (TSVS…GPLE) and 500–520 (KTMK…DEEF). Residues 415–428 (PSHTLPSHPLTPSS) show a composition bias toward polar residues. Residues 500-512 (KTMKKLLPKRKPE) show a composition bias toward basic residues. 2 positions are modified to phosphoserine: serine 516 and serine 560.

In terms of assembly, interacts with SCRIB; interaction is direct and may play a role in regulation of apoptosis. Interacts with PAK kinases through the SH3 domain. Interacts with GIT1 and probably TGFB1I1. Interacts with ITCH and PARVB. Interacts with FRMPD4 (via N-terminus). Interacts with CaMK1. Interacts with PTK2/FAK1 and RAC1. Interacts with BIN2. Interacts with YWHAZ. Interacts (via PH domain) with NOX1 (via FAD-binding FR-type domain). Phosphorylated on Ser-516 by CaMK1; enhancement of GEF activity and downstream activation of RAC1. Phosphorylated by PTK2/FAK1; this promotes interaction with RAC1.

The protein localises to the cell junction. The protein resides in the focal adhesion. Its subcellular location is the cell projection. It is found in the ruffle. It localises to the cytoplasm. The protein localises to the cell cortex. The protein resides in the lamellipodium. Acts as a RAC1 guanine nucleotide exchange factor (GEF) and can induce membrane ruffling. Functions in cell migration, attachment and cell spreading. Promotes targeting of RAC1 to focal adhesions. May function as a positive regulator of apoptosis. Downstream of NMDA receptors and CaMKK-CaMK1 signaling cascade, promotes the formation of spines and synapses in hippocampal neurons. The polypeptide is Rho guanine nucleotide exchange factor 7 (Arhgef7) (Rattus norvegicus (Rat)).